The following is a 305-amino-acid chain: Translation initiation factor eIF2B subunit alpha (305 aa).

Lys35 is modified (N6-acetyllysine).

The protein belongs to the eIF-2B alpha/beta/delta subunits family. As to quaternary structure, component of the translation initiation factor 2B (eIF2B) complex which is a heterodecamer of two sets of five different subunits: alpha, beta, gamma, delta and epsilon. Subunits alpha, beta and delta comprise a regulatory subcomplex and subunits epsilon and gamma comprise a catalytic subcomplex. Within the complex, the hexameric regulatory complex resides at the center, with the two heterodimeric catalytic subcomplexes bound on opposite sides.

The protein resides in the cytoplasm. It is found in the cytosol. With respect to regulation, activated by the chemical integrated stress response (ISR) inhibitor ISRIB which stimulates guanine nucleotide exchange factor activity for both phosphorylated and unphosphorylated eIF2. Acts as a component of the translation initiation factor 2B (eIF2B) complex, which catalyzes the exchange of GDP for GTP on eukaryotic initiation factor 2 (eIF2) gamma subunit. Its guanine nucleotide exchange factor activity is repressed when bound to eIF2 complex phosphorylated on the alpha subunit, thereby limiting the amount of methionyl-initiator methionine tRNA available to the ribosome and consequently global translation is repressed. The polypeptide is Translation initiation factor eIF2B subunit alpha (Eif2b1) (Rattus norvegicus (Rat)).